The following is an 84-amino-acid chain: M-zodatoxin-Lt2b (84 aa).

A signal peptide spans 1–22; it reads MKYFVIALALAVALVCIAESTA. The propeptide occupies 23–58; sequence YEVNEELENELDDLDDAAWLAVAEELQGLEDFEESR. The Processing quadruplet motif signature appears at 55–58; sequence EESR.

In terms of processing, cleavage of the propeptide depends on the processing quadruplet motif (XXXR, with at least one of X being E). As to expression, expressed by the venom gland.

It is found in the secreted. Its function is as follows. Has antimicrobial activity against both Gram-positive and Gram-negative bacteria, and yeasts. Also has a strong hemolytic activity against rabbit erythrocytes. Causes paralysis, but is not lethal when injected into insect (M.domestica) larvae. The polypeptide is M-zodatoxin-Lt2b (Lachesana tarabaevi (Spider)).